Consider the following 531-residue polypeptide: Pescadillo homolog (531 aa).

The BRCT domain occupies 309 to 398; it reads SIKTMFKGCV…RKLPTERYMP (90 aa).

It belongs to the pescadillo family.

Its subcellular location is the nucleus. The protein localises to the nucleolus. It localises to the nucleoplasm. Required for maturation of ribosomal RNAs and formation of the large ribosomal subunit. The polypeptide is Pescadillo homolog (Caenorhabditis elegans).